Consider the following 223-residue polypeptide: MVNVEAISLYGTPNIGVYIFANDRFALIPYDAPEKLDRKIAENLSVDAFRVSVAGTRLVGIFLAGNNNGLVVPRVILDSELEHLKSLLDVNIVVLEDVRETGIGNLVLANDNGCVASQILPKSAVDRIADALGVECIQMSIGDVPFVGSLSVATNRGVALPPLATEEEIKSVEEALKVKANVLTVNRGKMFLRTGLVANSKGALVGEDTTGHEMMQLQRIFFQ.

It belongs to the eIF-6 family.

Functionally, binds to the 50S ribosomal subunit and prevents its association with the 30S ribosomal subunit to form the 70S initiation complex. The sequence is that of Translation initiation factor 6 from Thermofilum pendens (strain DSM 2475 / Hrk 5).